The chain runs to 508 residues: Photosystem II CP47 reaction center protein (508 aa).

Helical transmembrane passes span 21 to 36, 101 to 115, 140 to 156, 203 to 218, 237 to 252, and 457 to 472; these read SVHI…WAGS, IVFS…IWHW, GIHL…FGAF, IAAG…FHLS, VLSS…AFVV, and SFAL…HGAR.

This sequence belongs to the PsbB/PsbC family. PsbB subfamily. In terms of assembly, PSII is composed of 1 copy each of membrane proteins PsbA, PsbB, PsbC, PsbD, PsbE, PsbF, PsbH, PsbI, PsbJ, PsbK, PsbL, PsbM, PsbT, PsbX, PsbY, PsbZ, Psb30/Ycf12, at least 3 peripheral proteins of the oxygen-evolving complex and a large number of cofactors. It forms dimeric complexes. The cofactor is Binds multiple chlorophylls. PSII binds additional chlorophylls, carotenoids and specific lipids..

Its subcellular location is the plastid. The protein localises to the chloroplast thylakoid membrane. Its function is as follows. One of the components of the core complex of photosystem II (PSII). It binds chlorophyll and helps catalyze the primary light-induced photochemical processes of PSII. PSII is a light-driven water:plastoquinone oxidoreductase, using light energy to abstract electrons from H(2)O, generating O(2) and a proton gradient subsequently used for ATP formation. The sequence is that of Photosystem II CP47 reaction center protein from Illicium oligandrum (Star anise).